The sequence spans 280 residues: Ribosomal RNA small subunit methyltransferase A (280 aa).

Residues asparagine 11, leucine 13, glycine 37, glutamate 57, aspartate 85, and asparagine 106 each contribute to the S-adenosyl-L-methionine site.

It belongs to the class I-like SAM-binding methyltransferase superfamily. rRNA adenine N(6)-methyltransferase family. RsmA subfamily.

Its subcellular location is the cytoplasm. It catalyses the reaction adenosine(1518)/adenosine(1519) in 16S rRNA + 4 S-adenosyl-L-methionine = N(6)-dimethyladenosine(1518)/N(6)-dimethyladenosine(1519) in 16S rRNA + 4 S-adenosyl-L-homocysteine + 4 H(+). Its function is as follows. Specifically dimethylates two adjacent adenosines (A1518 and A1519) in the loop of a conserved hairpin near the 3'-end of 16S rRNA in the 30S particle. May play a critical role in biogenesis of 30S subunits. The chain is Ribosomal RNA small subunit methyltransferase A from Campylobacter concisus (strain 13826).